A 275-amino-acid chain; its full sequence is Sulfate transporter CysZ (275 aa).

The disordered stretch occupies residues 1-24; it reads MSSEKSSFPEKPPSFEKPSHSNTA. Residues 13–24 are compositionally biased toward basic and acidic residues; sequence PSFEKPSHSNTA. A run of 4 helical transmembrane segments spans residues 49-69, 93-113, 169-189, and 232-252; these read FVIL…WWLF, LIWP…FSTI, IVLL…PVLW, and ALVS…PVAV.

It belongs to the CysZ family.

The protein resides in the cell inner membrane. Functionally, high affinity, high specificity proton-dependent sulfate transporter, which mediates sulfate uptake. Provides the sulfur source for the cysteine synthesis pathway. This chain is Sulfate transporter CysZ, found in Pectobacterium atrosepticum (strain SCRI 1043 / ATCC BAA-672) (Erwinia carotovora subsp. atroseptica).